The chain runs to 574 residues: Proline--tRNA ligase (574 aa).

It belongs to the class-II aminoacyl-tRNA synthetase family. ProS type 1 subfamily. Homodimer.

Its subcellular location is the cytoplasm. The catalysed reaction is tRNA(Pro) + L-proline + ATP = L-prolyl-tRNA(Pro) + AMP + diphosphate. Functionally, catalyzes the attachment of proline to tRNA(Pro) in a two-step reaction: proline is first activated by ATP to form Pro-AMP and then transferred to the acceptor end of tRNA(Pro). As ProRS can inadvertently accommodate and process non-cognate amino acids such as alanine and cysteine, to avoid such errors it has two additional distinct editing activities against alanine. One activity is designated as 'pretransfer' editing and involves the tRNA(Pro)-independent hydrolysis of activated Ala-AMP. The other activity is designated 'posttransfer' editing and involves deacylation of mischarged Ala-tRNA(Pro). The misacylated Cys-tRNA(Pro) is not edited by ProRS. The protein is Proline--tRNA ligase of Nitratidesulfovibrio vulgaris (strain DP4) (Desulfovibrio vulgaris).